Consider the following 232-residue polypeptide: RNA chaperone ProQ (232 aa).

The segment at 105–182 is disordered; the sequence is EAKARVQAQR…REEQHTPVSD (78 aa). Composition is skewed to basic and acidic residues over residues 117 to 138 and 147 to 177; these read QQAK…PPRE and RRKE…EEQH.

The protein belongs to the ProQ family.

The protein localises to the cytoplasm. Its function is as follows. RNA chaperone with significant RNA binding, RNA strand exchange and RNA duplexing activities. May regulate ProP activity through an RNA-based, post-transcriptional mechanism. This is RNA chaperone ProQ from Escherichia coli O139:H28 (strain E24377A / ETEC).